We begin with the raw amino-acid sequence, 392 residues long: F-box only protein 5-A (392 aa).

The interval 1–21 (MMCGFASNQSPKKLSSKKSSA) is disordered. The span at 7–20 (SNQSPKKLSSKKSS) shows a compositional bias: low complexity. The region spanning 197-244 (AELFHRDFKHLLTKILRHLSAMDLINVISVSTTWRKLLQKDNWAYNAY) is the F-box domain. The ZBR-type zinc finger occupies 319–367 (SLKVCVDCGSPAKHDPCLHRAICTRESCKLDFCTRCSCKYHFSKSCLMS). Residues Cys323, Cys326, Cys341, Cys346, Cys351, Cys354, His359, and Cys364 each contribute to the Zn(2+) site.

As to quaternary structure, part of a SCF (SKP1-cullin-F-box) protein ligase complex. Interacts with btrc. Interacts with skp1. Interacts with cdc20. Interacts with pin1; stabilizes fbxo5 by preventing its association with btrc in an isomerization-dependent pathway; this interaction is present during G2 phase and prevents fbxo5 degradation. Interacts with plk1. Proteolysed; proteolysis is induced by both cyclin B-cdk1 and cyclin A-cdk1/2 complex through probable phosphorylation. Proteolysis is inhibited by pin1 during G2.

It is found in the nucleus. The protein resides in the cytoplasm. It localises to the cytoskeleton. The protein localises to the spindle. Its subcellular location is the microtubule organizing center. It is found in the centrosome. It functions in the pathway protein modification; protein ubiquitination. Regulates progression through early mitosis by inhibiting the anaphase promoting complex/cyclosome (APC). Binds to the APC activator cdc20 to prevent APC activation. Can also bind directly to the APC to inhibit substrate-binding. Required to arrest unfertilized eggs at metaphase of meiosis II, by preventing their release from metaphase of meiosis II, through inhibition of APC-dependent cyclin B destruction leading to stabilization of cyclin B-cdk1 complex activity. This chain is F-box only protein 5-A (fbxo5-a), found in Xenopus laevis (African clawed frog).